We begin with the raw amino-acid sequence, 497 residues long: Glycerol kinase (497 aa).

Thr11 serves as a coordination point for ADP. ATP contacts are provided by Thr11, Ser12, and Ser13. Sn-glycerol 3-phosphate is bound at residue Thr11. Arg15 contributes to the ADP binding site. Sn-glycerol 3-phosphate is bound by residues Arg81, Glu82, Tyr133, and Asp242. Glycerol contacts are provided by Arg81, Glu82, Tyr133, Asp242, and Gln243. Thr264 and Gly307 together coordinate ADP. 4 residues coordinate ATP: Thr264, Gly307, Gln311, and Gly412. Positions 412 and 416 each coordinate ADP.

Belongs to the FGGY kinase family.

The catalysed reaction is glycerol + ATP = sn-glycerol 3-phosphate + ADP + H(+). It participates in polyol metabolism; glycerol degradation via glycerol kinase pathway; sn-glycerol 3-phosphate from glycerol: step 1/1. Inhibited by fructose 1,6-bisphosphate (FBP). Functionally, key enzyme in the regulation of glycerol uptake and metabolism. Catalyzes the phosphorylation of glycerol to yield sn-glycerol 3-phosphate. The polypeptide is Glycerol kinase (Polaromonas sp. (strain JS666 / ATCC BAA-500)).